The following is a 602-amino-acid chain: Leucine-rich repeat-containing protein 40 (602 aa).

The interval 1 to 20 (MSRLKRIAGQDPRAGFKAAG) is disordered. Ser-71 is modified (phosphoserine). LRR repeat units follow at residues 83-104 (DLTK…LRLL), 106-127 (ALTV…MREL), 129-150 (NLQK…ITNL), 152-173 (NLKC…FEQL), 175-196 (NLED…FSSL), 198-219 (SLVR…INRM), 221-242 (RLKH…LAGM), 244-265 (SLEL…PSCS), 266-286 (LLKE…EHLK), 290-311 (SILV…IILL), 313-335 (SLER…GNLH), 336-356 (LKFL…IINK), 400-421 (TLKI…VFNA), 426-447 (IITS…MVEL), 450-471 (MVSD…LCML), 473-494 (KLTF…MESL), 496-517 (RLQT…LYRI), 519-540 (TLET…KMKM), 543-564 (NLTT…LGNC), and 566-586 (NLRT…AILI).

The protein is Leucine-rich repeat-containing protein 40 (LRRC40) of Macaca fascicularis (Crab-eating macaque).